Reading from the N-terminus, the 927-residue chain is Protein unc-45 homolog B (927 aa).

TPR repeat units lie at residues 4 to 37 (PVQL…ITDK), 41 to 74 (AVLY…DASD), and 76 to 108 (KALF…EPKN). ARM repeat units lie at residues 167-206 (DAGA…GMCT), 209-248 (RARA…NIVD), and 746-785 (DKLR…NLAV).

The protein resides in the cytoplasm. Its subcellular location is the myofibril. It is found in the sarcomere. It localises to the z line. The protein localises to the a band. The protein resides in the perinuclear region. Its subcellular location is the cytosol. Acts as a co-chaperone for HSP90 and is required for proper folding of the myosin motor domain. Plays a role in sarcomere formation during muscle cell assembly. Is necessary for normal early lens development. The polypeptide is Protein unc-45 homolog B (Xenopus laevis (African clawed frog)).